Reading from the N-terminus, the 191-residue chain is CASP-like protein 4C2 (191 aa).

Topologically, residues 1-29 are cytoplasmic; that stretch reads MEAADSATNNSKDTHFYGKSRAENRRRSD. The chain crosses the membrane as a helical span at residues 30–50; that stretch reads AMLLLFRALTFSFSLAAVVVM. At 51-72 the chain is on the extracellular side; it reads GTNRYRINPQLKVSWYDFEPYR. The helical transmembrane segment at 73–93 threads the bilayer; it reads YVLAVNAIICIYSFVETWLAV. The Cytoplasmic segment spans residues 94–116; that stretch reads YTYLQGSYLLPEIFQVWFDYGHD. Residues 117–137 form a helical membrane-spanning segment; sequence QGFAYLLFSANSAGVAMAQLL. The Extracellular portion of the chain corresponds to 138–161; it reads QSGNTLIHGAYHCTEAGGYCTQAR. Residues 162–182 form a helical membrane-spanning segment; the sequence is VSIALGFVAFLFLALSSLLTG. At 183–191 the chain is on the cytoplasmic side; it reads LRVARWYLR.

This sequence belongs to the Casparian strip membrane proteins (CASP) family. As to quaternary structure, homodimer and heterodimers.

Its subcellular location is the cell membrane. In Physcomitrium patens (Spreading-leaved earth moss), this protein is CASP-like protein 4C2.